The chain runs to 643 residues: tRNA 5-methylaminomethyl-2-thiouridine biosynthesis bifunctional protein MnmC (643 aa).

Residues 1–223 form a tRNA (mnm(5)s(2)U34)-methyltransferase region; the sequence is MPDRLVSATL…VDDRLVGDYA (223 aa). The FAD-dependent cmnm(5)s(2)U34 oxidoreductase stretch occupies residues 247-643; sequence IGAGLAGCAV…LRARRVGSAG (397 aa).

The protein in the N-terminal section; belongs to the methyltransferase superfamily. tRNA (mnm(5)s(2)U34)-methyltransferase family. It in the C-terminal section; belongs to the DAO family. It depends on FAD as a cofactor.

The protein localises to the cytoplasm. The enzyme catalyses 5-aminomethyl-2-thiouridine(34) in tRNA + S-adenosyl-L-methionine = 5-methylaminomethyl-2-thiouridine(34) in tRNA + S-adenosyl-L-homocysteine + H(+). Catalyzes the last two steps in the biosynthesis of 5-methylaminomethyl-2-thiouridine (mnm(5)s(2)U) at the wobble position (U34) in tRNA. Catalyzes the FAD-dependent demodification of cmnm(5)s(2)U34 to nm(5)s(2)U34, followed by the transfer of a methyl group from S-adenosyl-L-methionine to nm(5)s(2)U34, to form mnm(5)s(2)U34. The sequence is that of tRNA 5-methylaminomethyl-2-thiouridine biosynthesis bifunctional protein MnmC from Burkholderia orbicola (strain MC0-3).